The primary structure comprises 87 residues: Exodeoxyribonuclease 7 small subunit (87 aa).

The protein belongs to the XseB family. Heterooligomer composed of large and small subunits.

Its subcellular location is the cytoplasm. The enzyme catalyses Exonucleolytic cleavage in either 5'- to 3'- or 3'- to 5'-direction to yield nucleoside 5'-phosphates.. In terms of biological role, bidirectionally degrades single-stranded DNA into large acid-insoluble oligonucleotides, which are then degraded further into small acid-soluble oligonucleotides. The sequence is that of Exodeoxyribonuclease 7 small subunit from Pelotomaculum thermopropionicum (strain DSM 13744 / JCM 10971 / SI).